A 151-amino-acid chain; its full sequence is MTIKPSDSVSWFQVLQRGQHYMKTWPADKRLAPVFPENRVTVVTRFGIRFMPPLAIFTLTWQIALGGQLGPAIATALFACGLPLQGLWWLGKRAITPLPPTLLQWFHEVRHKLFEAGQAVAPIEPIPTYQSLADLLKRAFKQLDKTFLDDL.

A run of 2 helical transmembrane segments spans residues 46–66 (FGIR…IALG) and 69–89 (LGPA…GLWW).

This sequence belongs to the UPF0208 family.

It localises to the cell inner membrane. This is UPF0208 membrane protein YPDSF_1972 from Yersinia pestis (strain Pestoides F).